A 304-amino-acid chain; its full sequence is RING-H2 finger protein ATL2 (304 aa).

A helical transmembrane segment spans residues 30-50 (IMLSAIVILFFVVILMVFLHL). An RING-type; atypical zinc finger spans residues 119–161 (CAVCLSEFEESETGRVLPNCQHTFHVDCIDMWFHSHSTCPLCR). The tract at residues 194–304 (EPSSSSGLTD…DIERGGEESR (111 aa)) is disordered. Positions 227-244 (VPRRTFSEFEDELTRRDS) are enriched in basic and acidic residues. Polar residues predominate over residues 283–293 (PTLSCRIQMTE). Positions 295 to 304 (DIERGGEESR) are enriched in basic and acidic residues.

This sequence belongs to the RING-type zinc finger family. ATL subfamily. In terms of tissue distribution, preferentially expressed around the apical meristem region.

The protein localises to the membrane. The enzyme catalyses S-ubiquitinyl-[E2 ubiquitin-conjugating enzyme]-L-cysteine + [acceptor protein]-L-lysine = [E2 ubiquitin-conjugating enzyme]-L-cysteine + N(6)-ubiquitinyl-[acceptor protein]-L-lysine.. It functions in the pathway protein modification; protein ubiquitination. Its function is as follows. May be involved in the early steps of the plant defense signaling pathway. This chain is RING-H2 finger protein ATL2 (ATL2), found in Arabidopsis thaliana (Mouse-ear cress).